The sequence spans 464 residues: 3-isopropylmalate dehydratase large subunit (464 aa).

[4Fe-4S] cluster contacts are provided by cysteine 337, cysteine 397, and cysteine 400.

The protein belongs to the aconitase/IPM isomerase family. LeuC type 1 subfamily. As to quaternary structure, heterodimer of LeuC and LeuD. The cofactor is [4Fe-4S] cluster.

It catalyses the reaction (2R,3S)-3-isopropylmalate = (2S)-2-isopropylmalate. Its pathway is amino-acid biosynthesis; L-leucine biosynthesis; L-leucine from 3-methyl-2-oxobutanoate: step 2/4. Functionally, catalyzes the isomerization between 2-isopropylmalate and 3-isopropylmalate, via the formation of 2-isopropylmaleate. The polypeptide is 3-isopropylmalate dehydratase large subunit (Bacillus cereus (strain ATCC 14579 / DSM 31 / CCUG 7414 / JCM 2152 / NBRC 15305 / NCIMB 9373 / NCTC 2599 / NRRL B-3711)).